A 256-amino-acid chain; its full sequence is MQRTKEAMKASDGSLLGDPGRIPLSKREGIKWQRPRFTRQALMRCCLIKWILSSAAPQGSDSSDSELELSTVRHQPEGLDQLQAQTKFTKKELQSLYRGFKNECPTGLVDEDTFKLIYSQFFPQGDATTYAHFLFNAFDADGNGAIHFEDFVVGLSILLRGTVHEKLKWAFNLYDINKDGYITKEEMLAIMKSIYDMMGRHTYPILREDAPLEHVERFFQKMDRNQDGVVTIDEFLETCQKDENIMSSMQLFENVI.

The tract at residues 1-22 (MQRTKEAMKASDGSLLGDPGRI) is disordered. Ser-14 bears the Phosphoserine mark. Lys-26 participates in a covalent cross-link: Glycyl lysine isopeptide (Lys-Gly) (interchain with G-Cter in SUMO1). S-palmitoyl cysteine attachment occurs at residues Cys-45 and Cys-46. Phosphoserine occurs at positions 60 and 63. Residues 67 to 123 (LELSTVRHQPEGLDQLQAQTKFTKKELQSLYRGFKNECPTGLVDEDTFKLIYSQFFP) form the EF-hand 1; degenerate domain. A Glycyl lysine isopeptide (Lys-Gly) (interchain with G-Cter in SUMO1) cross-link involves residue Lys-90. 3 EF-hand domains span residues 126–161 (DATT…LLRG), 162–197 (TVHE…IYDM), and 210–245 (APLE…DENI). Residues Asp-175, Asn-177, Asp-179, Tyr-181, Glu-186, Asp-223, Asn-225, Asp-227, and Glu-234 each contribute to the Ca(2+) site. The tract at residues 243-256 (ENIMSSMQLFENVI) is interaction with KCND2.

It belongs to the recoverin family. In terms of assembly, binds to DNA as a homomultimer. Dimerization is induced by binding to calcium. Interacts with the C-terminus of PSEN1 and PSEN2 and with PSEN2 CTF subunit. Associates with KCN1. Component of heteromultimeric potassium channels. Identified in potassium channel complexes containing KCND1, KCND2, KCND3, KCNIP1, KCNIP2, KCNIP3, KCNIP4, DPP6 and DPP10. Interacts with KCND2 and KCND3. Post-translationally, palmitoylated. Palmitoylation enhances association with the plasma membrane. In terms of processing, proteolytically cleaved by caspase-3. Detected in brain cortex, thalamus, dentate gyrus and cerebellum (at protein level). Expressed in brain. Colocalizes with KCND2 in excitatory neurons including cortical and hippocampal CA1 pyramidal cells.

It localises to the cytoplasm. The protein resides in the cell membrane. The protein localises to the endoplasmic reticulum. Its subcellular location is the golgi apparatus. It is found in the nucleus. Functionally, calcium-dependent transcriptional repressor that binds to the DRE element of genes including PDYN and FOS. Affinity for DNA is reduced upon binding to calcium and enhanced by binding to magnesium. Seems to be involved in nociception. Regulatory subunit of Kv4/D (Shal)-type voltage-gated rapidly inactivating A-type potassium channels, such as KCND2/Kv4.2 and KCND3/Kv4.3. Modulates channel expression at the cell membrane, gating characteristics, inactivation kinetics and rate of recovery from inactivation in a calcium-dependent and isoform-specific manner. In terms of biological role, may play a role in the regulation of PSEN2 proteolytic processing and apoptosis. Together with PSEN2 involved in modulation of amyloid-beta formation. The sequence is that of Calsenilin (Kcnip3) from Rattus norvegicus (Rat).